Here is a 202-residue protein sequence, read N- to C-terminus: Dephospho-CoA kinase (202 aa).

In terms of domain architecture, DPCK spans 6-202; the sequence is KISVTGDPSS…QCFKALKGTI (197 aa). 14–19 serves as a coordination point for ATP; that stretch reads SSGKTE.

Belongs to the CoaE family.

It localises to the cytoplasm. The catalysed reaction is 3'-dephospho-CoA + ATP = ADP + CoA + H(+). Its pathway is cofactor biosynthesis; coenzyme A biosynthesis; CoA from (R)-pantothenate: step 5/5. Functionally, catalyzes the phosphorylation of the 3'-hydroxyl group of dephosphocoenzyme A to form coenzyme A. This is Dephospho-CoA kinase from Chlamydia trachomatis serovar A (strain ATCC VR-571B / DSM 19440 / HAR-13).